An 88-amino-acid polypeptide reads, in one-letter code: Small ribosomal subunit protein uS19 (88 aa).

It belongs to the universal ribosomal protein uS19 family.

Functionally, protein S19 forms a complex with S13 that binds strongly to the 16S ribosomal RNA. The protein is Small ribosomal subunit protein uS19 of Mycoplasma mycoides subsp. mycoides SC (strain CCUG 32753 / NCTC 10114 / PG1).